The sequence spans 2173 residues: Mediator of RNA polymerase II transcription subunit 12 (2173 aa).

Disordered stretches follow at residues 1–34, 318–345, 630–718, 784–804, 1380–1404, 1443–1467, 1737–1780, and 2020–2068; these read MAAFGVLSYEHRPLKRPRLGPPDVYPQDPKQKED, GGHQAHGISAQQGNALPPTPTSQPAGGN, ASNS…KGMD, KSTAETGGEEGQKRKRSKPEA, MNSSNPSWNGSAVSGSSVSNSNSAS, ELEKGQHLGPSSRKERDRQKQKSMS, EEEP…VKQE, and QGIH…FRPQ. Over residues 702–717 the composition is skewed to basic and acidic residues; the sequence is QAQEQESKSTAKDKGM. Over residues 1389-1404 the composition is skewed to low complexity; it reads GSAVSGSSVSNSNSAS. Composition is skewed to basic and acidic residues over residues 1443-1462 and 1747-1759; these read ELEKGQHLGPSSRKERDRQK and EPDKKLDTAKVEK. The segment covering 2034-2057 has biased composition (low complexity); that stretch reads QQQQQQQQQQQQQQQQQQVHQQQQ.

Belongs to the Mediator complex subunit 12 family. In terms of assembly, component of the Mediator complex.

It localises to the nucleus. Its function is as follows. Component of the Mediator complex, a coactivator involved in regulated gene transcription of nearly all RNA polymerase II-dependent genes. Mediator functions as a bridge to convey information from gene-specific regulatory proteins to the basal RNA polymerase II transcription machinery. Mediator is recruited to promoters by direct interactions with regulatory proteins and serves as a scaffold for the assembly of a functional preinitiation complex with RNA polymerase II and the general transcription factors. Required for development of the body axis, brain, ear, kidney, forelimb and neural crest and for pigmentation. Acts as a coactivator for sox9a and/or sox9b promoting the expression of several neuronal determination genes. In Danio rerio (Zebrafish), this protein is Mediator of RNA polymerase II transcription subunit 12 (med12).